The chain runs to 796 residues: Inactive dipeptidyl peptidase 10 (796 aa).

At 1–34 the chain is on the cytoplasmic side; it reads MNQTASVSHHIKCQPSKTIKELGSNSPPQRNWKG. Residues 1 to 56 are mediates effects on KCND2; sequence MNQTASVSHHIKCQPSKTIKELGSNSPPQRNWKGIAIALLVILVVCSLITMSVILL. Residues 35–55 traverse the membrane as a helical; Signal-anchor for type II membrane protein segment; that stretch reads IAIALLVILVVCSLITMSVIL. The Extracellular segment spans residues 56–796; that stretch reads LTPDELTNSS…VLPQEPEEDE (741 aa). 3 N-linked (GlcNAc...) asparagine glycosylation sites follow: asparagine 90, asparagine 111, and asparagine 119. Phosphotyrosine is present on residues tyrosine 138 and tyrosine 143. N-linked (GlcNAc...) asparagine glycosylation is found at asparagine 257, asparagine 342, and asparagine 748.

This sequence belongs to the peptidase S9B family. DPPIV subfamily. As to quaternary structure, may form oligomers. Interacts with KCND1. Interacts with KCND2. In terms of processing, N-glycosylation is important for cell surface expression, specially at Asn-257, which is crucial. As to expression, found in serum, T-cells and brain (at protein level). Expressed in brain, pancreas, spinal cord and adrenal glands.

It is found in the cell membrane. Its function is as follows. Promotes cell surface expression of the potassium channel KCND2. Modulates the activity and gating characteristics of the potassium channel KCND2. Has no dipeptidyl aminopeptidase activity. In Homo sapiens (Human), this protein is Inactive dipeptidyl peptidase 10 (DPP10).